Here is a 552-residue protein sequence, read N- to C-terminus: Putative transport protein PBPRA2144 (552 aa).

Helical transmembrane passes span Ile4–Trp24, Ile26–Phe46, Phe65–Ser85, Ala95–Phe115, and Met158–Leu178. 2 RCK C-terminal domains span residues Lys188 to Glu276 and Asp279 to Asn361. The next 6 helical transmembrane spans lie at Met371 to Leu391, Phe394 to Ala414, Ile439 to Val459, Leu464 to Leu484, Tyr493 to Ala513, and Pro532 to Val552.

It belongs to the AAE transporter (TC 2.A.81) family. YidE subfamily.

The protein resides in the cell membrane. This chain is Putative transport protein PBPRA2144, found in Photobacterium profundum (strain SS9).